Consider the following 365-residue polypeptide: Outer membrane protein assembly factor BamC (365 aa).

The signal sequence occupies residues 1-19 (MKHNRLAIAALAPVLILVG). Cysteine 20 carries the N-palmitoyl cysteine lipid modification. Cysteine 20 is lipidated: S-diacylglycerol cysteine.

Belongs to the BamC family. As to quaternary structure, part of the Bam complex.

It localises to the cell outer membrane. In terms of biological role, part of the outer membrane protein assembly complex, which is involved in assembly and insertion of beta-barrel proteins into the outer membrane. This chain is Outer membrane protein assembly factor BamC, found in Ferrimonas balearica (strain DSM 9799 / CCM 4581 / KCTC 23876 / PAT).